Consider the following 891-residue polypeptide: Aconitate hydratase A (891 aa).

Residues Cys-435, Cys-501, and Cys-504 each contribute to the [4Fe-4S] cluster site.

This sequence belongs to the aconitase/IPM isomerase family. In terms of assembly, monomer. The cofactor is [4Fe-4S] cluster.

It catalyses the reaction citrate = D-threo-isocitrate. It functions in the pathway carbohydrate metabolism; tricarboxylic acid cycle; isocitrate from oxaloacetate: step 2/2. In terms of biological role, catalyzes the reversible isomerization of citrate to isocitrate via cis-aconitate. The apo form of AcnA functions as a RNA-binding regulatory protein which plays a role as a maintenance or survival enzyme during nutritional or oxidative stress. During oxidative stress inactive AcnA apo-enzyme without iron sulfur clusters binds the acnA mRNA 3' UTRs (untranslated regions), stabilizes acnA mRNA and increases AcnA synthesis, thus mediating a post-transcriptional positive autoregulatory switch. AcnA also enhances the stability of the sodA transcript. This Escherichia coli (strain K12) protein is Aconitate hydratase A.